Here is a 595-residue protein sequence, read N- to C-terminus: Indole-3-acetic acid-amido synthetase GH3.15 (595 aa).

Residues 97–98 (SS), T302, and 325–330 (FYGSSE) each bind ATP. Residues F325 and F332 each coordinate substrate. ATP-binding residues include Y348 and D408.

The protein belongs to the IAA-amido conjugating enzyme family. As to expression, expressed in seedlings, roots, and parts of the siliques.

The catalysed reaction is (indol-3-yl)butanoate + L-cysteine + ATP = (indol-3-yl)butanoyl-L-cysteine + AMP + diphosphate + H(+). It catalyses the reaction (indol-3-yl)butanoate + L-glutamine + ATP = (indol-3-yl)butanoyl-L-glutamine + AMP + diphosphate + H(+). The enzyme catalyses 4-(2,4-dichlorophenoxy)butanoate + L-glutamine + ATP = 4-(2,4-dichlorophenoxy)butanoyl-L-glutamine + AMP + diphosphate + H(+). Indole-3-acetic acid-amido (IAA) synthetase that catalyzes the conjugation of amino acids to auxin specifically using the auxin precursor indole-3-butyric acid (IBA) and glutamine and, possibly, cysteine as substrates. Displays high catalytic activity with the auxinic phenoxyalkanoic acid herbicides 4-(2,4-dichlorophenoxy)butyric acid (2,4-DB) and to some extent 2,4-dichlorophenoxylacetic acid (2,4-D) as substrates, thus conferring resistance to herbicides. The sequence is that of Indole-3-acetic acid-amido synthetase GH3.15 from Arabidopsis thaliana (Mouse-ear cress).